Consider the following 869-residue polypeptide: DNA mismatch repair protein MutS (869 aa).

An ATP-binding site is contributed by 602–609 (GPNMSGKS).

The protein belongs to the DNA mismatch repair MutS family.

Functionally, this protein is involved in the repair of mismatches in DNA. It is possible that it carries out the mismatch recognition step. This protein has a weak ATPase activity. The protein is DNA mismatch repair protein MutS of Bacillus licheniformis (strain ATCC 14580 / DSM 13 / JCM 2505 / CCUG 7422 / NBRC 12200 / NCIMB 9375 / NCTC 10341 / NRRL NRS-1264 / Gibson 46).